A 176-amino-acid polypeptide reads, in one-letter code: Non-specific lipid transfer protein GPI-anchored 12 (176 aa).

An N-terminal signal peptide occupies residues 1–20 (MLTTNTLAVLLLLFLSLCSG). Disulfide bonds link C40-C83, C50-C67, C68-C110, and C81-C120. The N-linked (GlcNAc...) asparagine glycan is linked to N46. A lipid anchor (GPI-anchor amidated asparagine) is attached at N149. The propeptide at 150–176 (GAMTTKYCGVALNSLALLLLFTFLSLS) is removed in mature form.

This sequence belongs to the plant LTP family. Preferentially expressed in the endodermis of hypocotyls and roots of seedlings, and in petals and anthers of inflorescences. May also be expressed in siliques, carpels and pedicels.

It localises to the cell membrane. Probable lipid transfer protein. The polypeptide is Non-specific lipid transfer protein GPI-anchored 12 (Arabidopsis thaliana (Mouse-ear cress)).